A 657-amino-acid chain; its full sequence is Penicillin-binding protein activator LpoA (657 aa).

The first 25 residues, 1–25 (MLSSTFVRSKAGLVPVILAALILAA), serve as a signal peptide directing secretion. Cysteine 26 carries N-palmitoyl cysteine lipidation. Cysteine 26 is lipidated: S-diacylglycerol cysteine.

The protein belongs to the LpoA family. In terms of assembly, interacts with PBP1a.

The protein localises to the cell outer membrane. In terms of biological role, regulator of peptidoglycan synthesis that is essential for the function of penicillin-binding protein 1A (PBP1a). The chain is Penicillin-binding protein activator LpoA from Yersinia pestis bv. Antiqua (strain Angola).